The sequence spans 4243 residues: Fibrocystin-L (4243 aa).

The N-terminal stretch at 1–20 (MGHLWLLGIWGLCGLLLCAA) is a signal peptide. The Extracellular portion of the chain corresponds to 21–4210 (DPSTDGSQII…KASTVGTYAQ (4190 aa)). IPT/TIG domains are found at residues 31 to 129 (PKVT…TCKG), 146 to 255 (PTIR…KMAY), and 270 to 361 (AEVT…ILEY). A glycan (O-linked (GalNAc...) threonine) is linked at T122. One can recognise a PA14 domain in the interval 337-492 (PGGRGLKLEV…NVYTEQQTGD (156 aa)). T445 carries an O-linked (GalNAc...) threonine glycan. 11 IPT/TIG domains span residues 1067–1151 (PLVL…EFYF), 1155–1234 (SQIS…AFSY), 1240–1322 (PIIT…RDKL), 1330–1469 (LEVT…SFSY), 1566–1649 (PSIS…TLSN), 1659–1743 (PNID…TFSY), 1749–1828 (PYIT…NLTV), 1831–1910 (PPVA…LFTY), 1916–1997 (PFLR…VFEY), 1999–2085 (LNIQ…PFTY), and 2091–2176 (PLIT…DFLY). T1803 and T1839 each carry an O-linked (GalNAc...) threonine glycan. Residues 2184–2304 (FSWGGKSPPE…VPVTWTRLAH (121 aa)) enclose the G8 1 domain. T2320 is a glycosylation site (O-linked (GalNAc...) threonine). PbH1 repeat units lie at residues 2508–2530 (THHL…FIED), 2566–2588 (NPNN…WYRM), 2665–2687 (GGAL…ETKR), and 2733–2756 (SEGL…ALGV). The G8 2 domain occupies 3036–3174 (SFWQSSRENN…HSIYKTKLSE (139 aa)). PbH1 repeat units follow at residues 3293–3315 (KGNA…RDST), 3355–3377 (TDGL…RIWG), 3416–3438 (GTNT…RIDG), 3471–3493 (PGCS…YFQT), and 3527–3548 (SKNV…NCSD). O-linked (GalNAc...) threonine glycosylation is present at T3736. The helical transmembrane segment at 4211-4231 (IMTVVISCLVGRMWLLEIFMA) threads the bilayer. The Cytoplasmic segment spans residues 4232–4243 (AVSTLNITLRSY).

It is found in the membrane. The protein localises to the cell projection. Its subcellular location is the stereocilium membrane. In terms of biological role, component of hair-cell stereocilia coat. Required for normal hearing. In Homo sapiens (Human), this protein is Fibrocystin-L (PKHD1L1).